A 154-amino-acid polypeptide reads, in one-letter code: 6,7-dimethyl-8-ribityllumazine synthase (154 aa).

Residues Trp22, 56-58 (AWE), and 80-82 (CVI) each bind 5-amino-6-(D-ribitylamino)uracil. 85–86 (DT) provides a ligand contact to (2S)-2-hydroxy-3-oxobutyl phosphate. The Proton donor role is filled by His88. Asn113 serves as a coordination point for 5-amino-6-(D-ribitylamino)uracil. Arg127 is a binding site for (2S)-2-hydroxy-3-oxobutyl phosphate.

It belongs to the DMRL synthase family. As to quaternary structure, forms an icosahedral capsid composed of 60 subunits, arranged as a dodecamer of pentamers.

The enzyme catalyses (2S)-2-hydroxy-3-oxobutyl phosphate + 5-amino-6-(D-ribitylamino)uracil = 6,7-dimethyl-8-(1-D-ribityl)lumazine + phosphate + 2 H2O + H(+). The protein operates within cofactor biosynthesis; riboflavin biosynthesis; riboflavin from 2-hydroxy-3-oxobutyl phosphate and 5-amino-6-(D-ribitylamino)uracil: step 1/2. Catalyzes the formation of 6,7-dimethyl-8-ribityllumazine by condensation of 5-amino-6-(D-ribitylamino)uracil with 3,4-dihydroxy-2-butanone 4-phosphate. This is the penultimate step in the biosynthesis of riboflavin. The sequence is that of 6,7-dimethyl-8-ribityllumazine synthase from Xanthomonas axonopodis pv. citri (strain 306).